A 259-amino-acid chain; its full sequence is MDITKMPIGFFDSGVGGLSVLREAIKVLPNEDFIYFGDSKNAPYGTKTVDEVKKLTFNAVEFLLGHNVKAVVIACNTATSAAIEDLRNSYKDIPIIGIEPALKPAVELNKKGKIVVMATPMTLAEKKFNDLMAKYKGRSEMVSLPCPGLVEYVEKGIVKGQELNNYLQKKLSIIDKKEISSVVLGCTHYPFIKEELSKILGEDVVIIDGSLGTSIQLKRKLIKNKSLNLQDKKGTVKIFNSLDNNEEIIKISKKLLGII.

Substrate is bound by residues 12–13 and 44–45; these read DS and YG. The Proton donor/acceptor role is filled by Cys75. Residue 76–77 participates in substrate binding; it reads NT. Residue Cys186 is the Proton donor/acceptor of the active site. 187–188 lines the substrate pocket; that stretch reads TH.

Belongs to the aspartate/glutamate racemases family.

It carries out the reaction L-glutamate = D-glutamate. It functions in the pathway cell wall biogenesis; peptidoglycan biosynthesis. Its function is as follows. Provides the (R)-glutamate required for cell wall biosynthesis. This Clostridium novyi (strain NT) protein is Glutamate racemase.